Here is a 210-residue protein sequence, read N- to C-terminus: Thymidylate kinase (210 aa).

Residue 11–18 (GVDGAGKT) coordinates ATP.

It belongs to the thymidylate kinase family.

The catalysed reaction is dTMP + ATP = dTDP + ADP. Its function is as follows. Phosphorylation of dTMP to form dTDP in both de novo and salvage pathways of dTTP synthesis. The sequence is that of Thymidylate kinase (tmk) from Mycoplasma genitalium (strain ATCC 33530 / DSM 19775 / NCTC 10195 / G37) (Mycoplasmoides genitalium).